Consider the following 790-residue polypeptide: Nuclear cap-binding protein subunit 1 (790 aa).

The segment at 1 to 26 is disordered; the sequence is MSRRRHSYENDGGQPHKRRKTSDANE. Residues 3–20 carry the Nuclear localization signal motif; sequence RRRHSYENDGGQPHKRRK. At Ser7 the chain carries Phosphoserine. Thr21 is modified (phosphothreonine). A phosphoserine mark is found at Ser22 and Ser201. An MIF4G domain is found at 28-240; the sequence is EDHLESLICK…CLWAQIQKLK (213 aa). Residue Lys204 is modified to N6-acetyllysine. A coiled-coil region spans residues 643-713; the sequence is STIRKMNKHV…SEQKNLFLVI (71 aa). Lys684 participates in a covalent cross-link: Glycyl lysine isopeptide (Lys-Gly) (interchain with G-Cter in SUMO2). Lys698 carries the post-translational modification N6-acetyllysine.

This sequence belongs to the NCBP1 family. In terms of assembly, component of the nuclear cap-binding complex (CBC), a heterodimer composed of NCBP1/CBP80 and NCBP2/CBP20 that interacts with m7GpppG-capped RNA. Found in a U snRNA export complex containing PHAX/RNUXA, NCBP1/CBP80, NCBP2/CBP20, RAN, XPO1 and m7G-capped RNA. Identified in a IGF2BP1-dependent mRNP granule complex containing untranslated mRNAs. Interacts with PHAX/RNUXA, SRRT/ARS2, EIF4G2, IGF2BP1, HNRNPF, HNRNPH1, KIAA0427/CTIF, PARN, DROSHA, UPF1 and ALYREF/THOC4. May interact with EIF4G1; the interaction is however controversial since it is reported by, and, but is not observed by. The large PER complex involved in the repression of transcriptional termination is composed of at least PER2, CDK9, DDX5, DHX9, NCBP1/CBP80 and POLR2A. Component of an alternative nuclear cap-binding complex (CBC) composed of NCBP1/CBP80 and NCBP3. Interacts with METTL3. Interacts with ZFC3H1 in a RNase-insensitive manner. Interacts with MTREX. Interacts with TASOR. Interacts with DHX34; the interaction is RNA-dependent. Interacts with KPNA3. Post-translationally, dephosphorylated at Thr-21 by the PNUTS-PP1 complex during RNA polymerase II transcription pause-release.

It localises to the nucleus. The protein resides in the cytoplasm. Component of the cap-binding complex (CBC), which binds cotranscriptionally to the 5'-cap of pre-mRNAs and is involved in various processes such as pre-mRNA splicing, translation regulation, nonsense-mediated mRNA decay, RNA-mediated gene silencing (RNAi) by microRNAs (miRNAs) and mRNA export. The CBC complex is involved in mRNA export from the nucleus via its interaction with ALYREF/THOC4/ALY, leading to the recruitment of the mRNA export machinery to the 5'-end of mRNA and to mRNA export in a 5' to 3' direction through the nuclear pore. The CBC complex is also involved in mediating U snRNA and intronless mRNAs export from the nucleus. The CBC complex is essential for a pioneer round of mRNA translation, before steady state translation when the CBC complex is replaced by cytoplasmic cap-binding protein eIF4E. The pioneer round of mRNA translation mediated by the CBC complex plays a central role in nonsense-mediated mRNA decay (NMD), NMD only taking place in mRNAs bound to the CBC complex, but not on eIF4E-bound mRNAs. The CBC complex enhances NMD in mRNAs containing at least one exon-junction complex (EJC) via its interaction with UPF1, promoting the interaction between UPF1 and UPF2. The CBC complex is also involved in 'failsafe' NMD, which is independent of the EJC complex, while it does not participate in Staufen-mediated mRNA decay (SMD). During cell proliferation, the CBC complex is also involved in microRNAs (miRNAs) biogenesis via its interaction with SRRT/ARS2 and is required for miRNA-mediated RNA interference. The CBC complex also acts as a negative regulator of PARN, thereby acting as an inhibitor of mRNA deadenylation. In the CBC complex, NCBP1/CBP80 does not bind directly capped RNAs (m7GpppG-capped RNA) but is required to stabilize the movement of the N-terminal loop of NCBP2/CBP20 and lock the CBC into a high affinity cap-binding state with the cap structure. Associates with NCBP3 to form an alternative cap-binding complex (CBC) which plays a key role in mRNA export and is particularly important in cellular stress situations such as virus infections. The conventional CBC with NCBP2 binds both small nuclear RNA (snRNA) and messenger (mRNA) and is involved in their export from the nucleus whereas the alternative CBC with NCBP3 does not bind snRNA and associates only with mRNA thereby playing a role only in mRNA export. NCBP1/CBP80 is required for cell growth and viability. The protein is Nuclear cap-binding protein subunit 1 (Ncbp1) of Rattus norvegicus (Rat).